The chain runs to 100 residues: Small ribosomal subunit protein uS14 (100 aa).

The protein belongs to the universal ribosomal protein uS14 family. Part of the 30S ribosomal subunit. Contacts proteins S3 and S10.

In terms of biological role, binds 16S rRNA, required for the assembly of 30S particles and may also be responsible for determining the conformation of the 16S rRNA at the A site. This chain is Small ribosomal subunit protein uS14, found in Thermosynechococcus vestitus (strain NIES-2133 / IAM M-273 / BP-1).